A 251-amino-acid chain; its full sequence is MSLVNEKLKLENIRSALIRQEDTIIFNFLERAQFPRNEKVYKSGKEGCLNLENYDGSFLNYLLHEEEKVYALVRRYASPEEYPFTDNLPEPILPKFSGKFPLHPNNVNVNSEILEYYINEIVPKISSPGDDFDNYGSTVVCDIRCLQSLSRRIHYGKFVAEAKYLANPEKYKKLILARDIKGIENEIVDAAQEERVLKRLHYKALNYGRDAADPTKPSDRINADCVASIYKDYVIPMTKKVEVDYLLARLL.

In terms of domain architecture, Chorismate mutase spans 1 to 251 (MSLVNEKLKL…EVDYLLARLL (251 aa)). L-tyrosine-binding residues include Arg-74, Arg-75, Asn-134, Gly-136, and Ser-137. Residues Asn-134, Gly-136, and Ser-137 each contribute to the L-tryptophan site.

As to quaternary structure, homodimer.

The protein resides in the cytoplasm. The catalysed reaction is chorismate = prephenate. The protein operates within metabolic intermediate biosynthesis; prephenate biosynthesis; prephenate from chorismate: step 1/1. With respect to regulation, each dimer has two allosteric binding sites that can bind the regulatory effectors tryptophan or tyrosine. Can bind either one tryptophan or one tyrosine, two tryptophan or two tyrosine or one tryptophan and one tyrosine, which differentially affect the catalytic activity. Activated by tryptophan and subject to feedback inhibition by tyrosine. In the presence of both tryptophan and tyrosine, the enzyme is in the activated state. Functionally, catalyzes the Claisen rearrangement of chorismate to prephenate. Acts at the first branch point in the aromatic amino acid pathway where it steers biosynthesis towards phenylalanine and tyrosine, and away from tryptophan. This Schizosaccharomyces pombe (strain 972 / ATCC 24843) (Fission yeast) protein is Chorismate mutase.